The chain runs to 88 residues: Small ribosomal subunit protein bS16c (88 aa).

This sequence belongs to the bacterial ribosomal protein bS16 family.

The protein localises to the plastid. It is found in the chloroplast. In Lactuca sativa (Garden lettuce), this protein is Small ribosomal subunit protein bS16c.